The following is a 156-amino-acid chain: Transcription elongation factor GreA (156 aa).

The stretch at 1 to 32 forms a coiled coil; the sequence is MKKVRLTREGYEKLKQELEELKRKFMYEISER.

It belongs to the GreA/GreB family.

In terms of biological role, necessary for efficient RNA polymerase transcription elongation past template-encoded arresting sites. The arresting sites in DNA have the property of trapping a certain fraction of elongating RNA polymerases that pass through, resulting in locked ternary complexes. Cleavage of the nascent transcript by cleavage factors such as GreA or GreB allows the resumption of elongation from the new 3'terminus. GreA releases sequences of 2 to 3 nucleotides. This Thermotoga neapolitana (strain ATCC 49049 / DSM 4359 / NBRC 107923 / NS-E) protein is Transcription elongation factor GreA.